Here is a 166-residue protein sequence, read N- to C-terminus: Signal peptidase complex catalytic subunit SEC11 (166 aa).

The Cytoplasmic portion of the chain corresponds to 1-9 (MNIRQQLTQ). The helical; Signal-anchor for type II membrane protein transmembrane segment at 10 to 30 (FLSLAYVFTSAFVIWKSLGII) threads the bilayer. At 31–166 (TNSHSPIVVV…MCISTLLTNE (136 aa)) the chain is on the lumenal side. Active-site charge relay system residues include Ser44, His83, and Asp108. Residues 152–163 (GMLGLMCISTLL) are C-terminal short (CTS) helix.

Belongs to the peptidase S26B family. Component of the signal peptidase complex (SPC) composed of a catalytic subunit SEC11 and three accessory subunits SPC1, SPC2 and SPC3. The complex induces a local thinning of the ER membrane which is used to measure the length of the signal peptide (SP) h-region of protein substrates. This ensures the selectivity of the complex towards h-regions shorter than 18-20 amino acids. SPC associates with the translocon complex.

It localises to the endoplasmic reticulum membrane. The catalysed reaction is Cleavage of hydrophobic, N-terminal signal or leader sequences from secreted and periplasmic proteins.. Its function is as follows. Catalytic component of the signal peptidase complex (SPC) which catalyzes the cleavage of N-terminal signal sequences from nascent proteins as they are translocated into the lumen of the endoplasmic reticulum. Specifically cleaves N-terminal signal peptides that contain a hydrophobic alpha-helix (h-region) shorter than 18-20 amino acids. The chain is Signal peptidase complex catalytic subunit SEC11 (SEC11) from Scheffersomyces stipitis (strain ATCC 58785 / CBS 6054 / NBRC 10063 / NRRL Y-11545) (Yeast).